The following is a 636-amino-acid chain: Beta-galactosidase-1-like protein 2 (636 aa).

The signal sequence occupies residues M1–W32. E201 acts as the Proton donor in catalysis. Catalysis depends on E277, which acts as the Nucleophile.

Belongs to the glycosyl hydrolase 35 family.

It localises to the secreted. This Homo sapiens (Human) protein is Beta-galactosidase-1-like protein 2 (GLB1L2).